A 37-amino-acid chain; its full sequence is Neuropeptide Y2-like conopeptide (37 aa).

Tyrosine amide is present on tyrosine 37.

The protein belongs to the NPY family. Expressed by the venom duct.

It is found in the secreted. Causes hyperactivity such as jumping, rapid circling and tail flicking, after intraventicular injection into mouse brain. The sequence is that of Neuropeptide Y2-like conopeptide from Conus betulinus (Beech cone).